The sequence spans 402 residues: L-threonine ammonia-lyase (402 aa).

Lys-51 is modified (N6-(pyridoxal phosphate)lysine). Pyridoxal 5'-phosphate-binding positions include Asn-78, 178–181, and Ser-302; that span reads GGGL. One can recognise an ACT domain in the interval 327–402; that stretch reads KLKVELDDLP…GVGYLVDVLK (76 aa).

This sequence belongs to the serine/threonine dehydratase family. Pyridoxal 5'-phosphate serves as cofactor.

The enzyme catalyses L-threonine = 2-oxobutanoate + NH4(+). It catalyses the reaction L-serine = pyruvate + NH4(+). The protein operates within amino-acid biosynthesis; L-isoleucine biosynthesis; 2-oxobutanoate from L-threonine: step 1/1. Functionally, catalyzes the conversion of threonine to 2-oxobutanoate and ammonia. Functions in the threonine-dependent pathway of isoleucine biosynthesis, which is the minor pathway for isoleucine biosynthesis in G.sulfurreducens. Also displays serine ammonia-lyase activity, yielding pyruvate from L-serine. The sequence is that of L-threonine ammonia-lyase from Geobacter sulfurreducens (strain ATCC 51573 / DSM 12127 / PCA).